The following is a 516-amino-acid chain: Putative thymidine phosphorylase (516 aa).

The protein belongs to the thymidine/pyrimidine-nucleoside phosphorylase family. Type 2 subfamily.

It catalyses the reaction thymidine + phosphate = 2-deoxy-alpha-D-ribose 1-phosphate + thymine. The protein is Putative thymidine phosphorylase of Methylococcus capsulatus (strain ATCC 33009 / NCIMB 11132 / Bath).